Here is a 589-residue protein sequence, read N- to C-terminus: uncharacterized protein (589 aa).

Transmembrane regions (helical) follow at residues 90–110 (YIVI…QTVI), 128–148 (SWIG…CGIM), 162–182 (IVLF…LWLV), 189–209 (GIGG…ITPL), 217–237 (GCMG…GGAI), 245–265 (WIFF…IFFL), 284–304 (FVGI…LNIG), 311–331 (AHAN…GFVV), 355–375 (VMVT…YIPI), 390–410 (VHTL…GMGI), 418–438 (YPMI…IAIY), 448–468 (GFLA…LIAI), 483–503 (AFML…AVIY), and 545–565 (IRTI…LSFF).

It belongs to the major facilitator superfamily. TCR/Tet family.

It localises to the membrane. This is an uncharacterized protein from Schizosaccharomyces pombe (strain 972 / ATCC 24843) (Fission yeast).